A 407-amino-acid chain; its full sequence is Phosphopentomutase (407 aa).

The Mn(2+) site is built by Asp10, Asp306, His311, Asp347, His348, and His359.

Belongs to the phosphopentomutase family. The cofactor is Mn(2+).

It is found in the cytoplasm. It catalyses the reaction 2-deoxy-alpha-D-ribose 1-phosphate = 2-deoxy-D-ribose 5-phosphate. It carries out the reaction alpha-D-ribose 1-phosphate = D-ribose 5-phosphate. The protein operates within carbohydrate degradation; 2-deoxy-D-ribose 1-phosphate degradation; D-glyceraldehyde 3-phosphate and acetaldehyde from 2-deoxy-alpha-D-ribose 1-phosphate: step 1/2. Its function is as follows. Isomerase that catalyzes the conversion of deoxy-ribose 1-phosphate (dRib-1-P) and ribose 1-phosphate (Rib-1-P) to deoxy-ribose 5-phosphate (dRib-5-P) and ribose 5-phosphate (Rib-5-P), respectively. This Salmonella arizonae (strain ATCC BAA-731 / CDC346-86 / RSK2980) protein is Phosphopentomutase.